The following is a 123-amino-acid chain: Phosphoribosyl-AMP cyclohydrolase (123 aa).

Residue aspartate 73 coordinates Mg(2+). Cysteine 74 contacts Zn(2+). 2 residues coordinate Mg(2+): aspartate 75 and aspartate 77. Zn(2+)-binding residues include cysteine 90 and cysteine 97.

Belongs to the PRA-CH family. Homodimer. Mg(2+) serves as cofactor. Zn(2+) is required as a cofactor.

The protein localises to the cytoplasm. It catalyses the reaction 1-(5-phospho-beta-D-ribosyl)-5'-AMP + H2O = 1-(5-phospho-beta-D-ribosyl)-5-[(5-phospho-beta-D-ribosylamino)methylideneamino]imidazole-4-carboxamide. It participates in amino-acid biosynthesis; L-histidine biosynthesis; L-histidine from 5-phospho-alpha-D-ribose 1-diphosphate: step 3/9. Functionally, catalyzes the hydrolysis of the adenine ring of phosphoribosyl-AMP. This is Phosphoribosyl-AMP cyclohydrolase from Methanoregula boonei (strain DSM 21154 / JCM 14090 / 6A8).